Reading from the N-terminus, the 296-residue chain is Nucleotide-binding protein M6_Spy0559 (296 aa).

Residue 13–20 participates in ATP binding; sequence GMSGAGKT. GTP is bound at residue 63–66; sequence DMRS.

Belongs to the RapZ-like family.

Displays ATPase and GTPase activities. The polypeptide is Nucleotide-binding protein M6_Spy0559 (Streptococcus pyogenes serotype M6 (strain ATCC BAA-946 / MGAS10394)).